The primary structure comprises 113 residues: Hydrogenase maturation factor HypA (113 aa).

Residue His-2 coordinates Ni(2+). Cys-73, Cys-76, Cys-89, and Cys-92 together coordinate Zn(2+).

The protein belongs to the HypA/HybF family.

Its function is as follows. Involved in the maturation of [NiFe] hydrogenases. Required for nickel insertion into the metal center of the hydrogenase. This is Hydrogenase maturation factor HypA from Bradyrhizobium sp. (strain ORS 278).